Reading from the N-terminus, the 422-residue chain is Serine hydroxymethyltransferase (422 aa).

Residues Leu118 and 122 to 124 (GHL) each bind (6S)-5,6,7,8-tetrahydrofolate. At Lys227 the chain carries N6-(pyridoxal phosphate)lysine. (6S)-5,6,7,8-tetrahydrofolate-binding positions include Glu243 and 351 to 353 (SPF).

Belongs to the SHMT family. Homodimer. The cofactor is pyridoxal 5'-phosphate.

Its subcellular location is the cytoplasm. It carries out the reaction (6R)-5,10-methylene-5,6,7,8-tetrahydrofolate + glycine + H2O = (6S)-5,6,7,8-tetrahydrofolate + L-serine. The protein operates within one-carbon metabolism; tetrahydrofolate interconversion. It participates in amino-acid biosynthesis; glycine biosynthesis; glycine from L-serine: step 1/1. Its function is as follows. Catalyzes the reversible interconversion of serine and glycine with tetrahydrofolate (THF) serving as the one-carbon carrier. This reaction serves as the major source of one-carbon groups required for the biosynthesis of purines, thymidylate, methionine, and other important biomolecules. Also exhibits THF-independent aldolase activity toward beta-hydroxyamino acids, producing glycine and aldehydes, via a retro-aldol mechanism. In Kosmotoga olearia (strain ATCC BAA-1733 / DSM 21960 / TBF 19.5.1), this protein is Serine hydroxymethyltransferase.